We begin with the raw amino-acid sequence, 483 residues long: Isocitrate dehydrogenase [NADP] (483 aa).

Residue threonine 74 participates in NADP(+) binding. Residues serine 83, asparagine 85, arginine 89, arginine 99, and arginine 121 each coordinate D-threo-isocitrate. Aspartate 232 serves as a coordination point for Mg(2+). Residues 264–270 (HGSAPDI) and asparagine 277 each bind NADP(+).

Belongs to the isocitrate and isopropylmalate dehydrogenases family. Homodimer. The cofactor is Mg(2+). It depends on Mn(2+) as a cofactor.

It catalyses the reaction D-threo-isocitrate + NADP(+) = 2-oxoglutarate + CO2 + NADPH. Its function is as follows. Catalyzes the oxidative decarboxylation of isocitrate to 2-oxoglutarate and carbon dioxide with the concomitant reduction of NADP(+). This Rickettsia conorii (strain ATCC VR-613 / Malish 7) protein is Isocitrate dehydrogenase [NADP] (icd).